We begin with the raw amino-acid sequence, 104 residues long: U-scoloptoxin(10)-Cw1a (104 aa).

Positions 1–23 are cleaved as a signal peptide; the sequence is MNKTVAVFFAVICVICVIKSCKT.

Belongs to the scoloptoxin-10 family. Post-translationally, contains 3 disulfide bonds. Expressed by the venom gland.

The protein localises to the secreted. This is U-scoloptoxin(10)-Cw1a from Cormocephalus westwoodi (Westwood's green centipede).